The following is a 248-amino-acid chain: 1-(5-phosphoribosyl)-5-[(5-phosphoribosylamino)methylideneamino] imidazole-4-carboxamide isomerase (248 aa).

D8 functions as the Proton acceptor in the catalytic mechanism. The active-site Proton donor is the D129.

It belongs to the HisA/HisF family.

It is found in the cytoplasm. The catalysed reaction is 1-(5-phospho-beta-D-ribosyl)-5-[(5-phospho-beta-D-ribosylamino)methylideneamino]imidazole-4-carboxamide = 5-[(5-phospho-1-deoxy-D-ribulos-1-ylimino)methylamino]-1-(5-phospho-beta-D-ribosyl)imidazole-4-carboxamide. Its pathway is amino-acid biosynthesis; L-histidine biosynthesis; L-histidine from 5-phospho-alpha-D-ribose 1-diphosphate: step 4/9. The protein is 1-(5-phosphoribosyl)-5-[(5-phosphoribosylamino)methylideneamino] imidazole-4-carboxamide isomerase of Rhizobium johnstonii (strain DSM 114642 / LMG 32736 / 3841) (Rhizobium leguminosarum bv. viciae).